We begin with the raw amino-acid sequence, 644 residues long: Biosynthetic arginine decarboxylase (644 aa).

Lys-113 is modified (N6-(pyridoxal phosphate)lysine). Substrate is bound at residue 293–303 (FDVGGGLGVDY).

The protein belongs to the Orn/Lys/Arg decarboxylase class-II family. SpeA subfamily. It depends on Mg(2+) as a cofactor. The cofactor is pyridoxal 5'-phosphate.

It carries out the reaction L-arginine + H(+) = agmatine + CO2. Catalyzes the biosynthesis of agmatine from arginine. The protein is Biosynthetic arginine decarboxylase of Pasteurella multocida (strain Pm70).